Here is a 415-residue protein sequence, read N- to C-terminus: Serine hydroxymethyltransferase 1 (415 aa).

Residues leucine 122 and 126–128 each bind (6S)-5,6,7,8-tetrahydrofolate; that span reads GHL. An N6-(pyridoxal phosphate)lysine modification is found at lysine 230.

This sequence belongs to the SHMT family. Homodimer. Pyridoxal 5'-phosphate serves as cofactor.

The protein resides in the cytoplasm. It catalyses the reaction (6R)-5,10-methylene-5,6,7,8-tetrahydrofolate + glycine + H2O = (6S)-5,6,7,8-tetrahydrofolate + L-serine. It participates in one-carbon metabolism; tetrahydrofolate interconversion. It functions in the pathway amino-acid biosynthesis; glycine biosynthesis; glycine from L-serine: step 1/1. In terms of biological role, catalyzes the reversible interconversion of serine and glycine with tetrahydrofolate (THF) serving as the one-carbon carrier. This reaction serves as the major source of one-carbon groups required for the biosynthesis of purines, thymidylate, methionine, and other important biomolecules. Also exhibits THF-independent aldolase activity toward beta-hydroxyamino acids, producing glycine and aldehydes, via a retro-aldol mechanism. The polypeptide is Serine hydroxymethyltransferase 1 (Cupriavidus pinatubonensis (strain JMP 134 / LMG 1197) (Cupriavidus necator (strain JMP 134))).